The primary structure comprises 122 residues: Large-conductance mechanosensitive channel (122 aa).

The next 2 helical transmembrane spans lie at Phe-29–Phe-49 and Gly-66–Ile-86.

Belongs to the MscL family. In terms of assembly, homopentamer.

Its subcellular location is the cell membrane. Channel that opens in response to stretch forces in the membrane lipid bilayer. May participate in the regulation of osmotic pressure changes within the cell. This is Large-conductance mechanosensitive channel from Macrococcus caseolyticus (strain JCSC5402) (Macrococcoides caseolyticum).